The primary structure comprises 112 residues: Abdominal ganglion neuropeptides L5-67 (112 aa).

An N-terminal signal peptide occupies residues 1–23 (MKTAVLLVCLAYVMAAILSLCAS). Phe33 bears the Phenylalanine amide mark.

The prohormone is proteolytically cleaved in 2 steps, yielding first 2 products: luqin and PRMP. In the second step, PRMP is cleaved to yield luqin-B and luqin-C. As to expression, neurons L2-4 and L6, also called giant dorsal LUQ (Left Upper Quadrant) neurons of the abdominal ganglion. Also expressed in smaller neurons in the CNS and in peripheral organs such as the kidney.

The protein resides in the secreted. The protein is Abdominal ganglion neuropeptides L5-67 of Aplysia californica (California sea hare).